Here is a 474-residue protein sequence, read N- to C-terminus: Photosystem II CP43 reaction center protein (474 aa).

Residues 1–14 (MKTLYSLRRFYPVE) constitute a propeptide that is removed on maturation. T15 is modified (N-acetylthreonine). T15 carries the post-translational modification Phosphothreonine. The next 5 helical transmembrane spans lie at 69–93 (LFEVAHFVPEKPMYEQGLILLPHLA), 134–155 (LLGPETLEESFPFFGYVWKDRN), 178–201 (KALYFGGVYDTWAPGGGEMLRKIT), 256–276 (KPFAWARRALVWSGEAYLSYS), and 292–313 (WFNNTAYPSEFYGPTGPEASQA). E368 lines the [CaMn4O5] cluster pocket. Residues 448–472 (RARAAAAGFEKGIDRDFEPVLSMTP) form a helical membrane-spanning segment.

It belongs to the PsbB/PsbC family. PsbC subfamily. As to quaternary structure, PSII is composed of 1 copy each of membrane proteins PsbA, PsbB, PsbC, PsbD, PsbE, PsbF, PsbH, PsbI, PsbJ, PsbK, PsbL, PsbM, PsbT, PsbX, PsbY, PsbZ, Psb30/Ycf12, at least 3 peripheral proteins of the oxygen-evolving complex and a large number of cofactors. It forms dimeric complexes. Requires Binds multiple chlorophylls and provides some of the ligands for the Ca-4Mn-5O cluster of the oxygen-evolving complex. It may also provide a ligand for a Cl- that is required for oxygen evolution. PSII binds additional chlorophylls, carotenoids and specific lipids. as cofactor.

The protein localises to the plastid. The protein resides in the chloroplast thylakoid membrane. In terms of biological role, one of the components of the core complex of photosystem II (PSII). It binds chlorophyll and helps catalyze the primary light-induced photochemical processes of PSII. PSII is a light-driven water:plastoquinone oxidoreductase, using light energy to abstract electrons from H(2)O, generating O(2) and a proton gradient subsequently used for ATP formation. This is Photosystem II CP43 reaction center protein from Citrus sinensis (Sweet orange).